The chain runs to 219 residues: Translation initiation factor 6 (219 aa).

It belongs to the eIF-6 family.

Binds to the 50S ribosomal subunit and prevents its association with the 30S ribosomal subunit to form the 70S initiation complex. In Methanosarcina mazei (strain ATCC BAA-159 / DSM 3647 / Goe1 / Go1 / JCM 11833 / OCM 88) (Methanosarcina frisia), this protein is Translation initiation factor 6.